The sequence spans 447 residues: Methyl-coenzyme M reductase I subunit beta (447 aa).

Residue Tyr-371 participates in coenzyme M binding. Residue Gly-373 coordinates coenzyme B.

It belongs to the methyl-coenzyme M reductase beta subunit family. MCR is a hexamer of two alpha, two beta, and two gamma chains, forming a dimer of heterotrimers. Requires coenzyme F430 as cofactor.

The protein localises to the cytoplasm. It catalyses the reaction coenzyme B + methyl-coenzyme M = methane + coenzyme M-coenzyme B heterodisulfide. It participates in one-carbon metabolism; methyl-coenzyme M reduction; methane from methyl-coenzyme M: step 1/1. In terms of biological role, component of the methyl-coenzyme M reductase (MCR) I that catalyzes the reductive cleavage of methyl-coenzyme M (CoM-S-CH3 or 2-(methylthio)ethanesulfonate) using coenzyme B (CoB or 7-mercaptoheptanoylthreonine phosphate) as reductant which results in the production of methane and the mixed heterodisulfide of CoB and CoM (CoM-S-S-CoB). This is the final step in methanogenesis. This Methanocaldococcus jannaschii (strain ATCC 43067 / DSM 2661 / JAL-1 / JCM 10045 / NBRC 100440) (Methanococcus jannaschii) protein is Methyl-coenzyme M reductase I subunit beta (mcrB).